A 565-amino-acid polypeptide reads, in one-letter code: Galactoside 2-alpha-L-fucosyltransferase (565 aa).

The Cytoplasmic portion of the chain corresponds to 1 to 43; the sequence is MNMLIKRVIAIKNPRGDDNNNNKLSDLETLTDKCTTCPLTLMR. The helical; Signal-anchor for type II membrane protein transmembrane segment at 44-64 threads the bilayer; the sequence is VMAFFVVSFMLFSVLFSLSVV. Over 65–565 the chain is Lumenal; it reads LRDPPSDAAI…MSWGLKLVDN (501 aa). N-linked (GlcNAc...) asparagine glycans are attached at residues N159, N263, N407, and N509.

The protein belongs to the glycosyltransferase 37 family.

It is found in the golgi apparatus. The protein localises to the golgi stack membrane. Its pathway is protein modification; protein glycosylation. In terms of biological role, involved in cell wall biosynthesis. Adds the terminal fucosyl residue on xyloglucan side chains. The protein is Galactoside 2-alpha-L-fucosyltransferase (FT1) of Pisum sativum (Garden pea).